The primary structure comprises 148 residues: Putative pre-16S rRNA nuclease (148 aa).

Belongs to the YqgF nuclease family.

It localises to the cytoplasm. Its function is as follows. Could be a nuclease involved in processing of the 5'-end of pre-16S rRNA. The protein is Putative pre-16S rRNA nuclease of Colwellia psychrerythraea (strain 34H / ATCC BAA-681) (Vibrio psychroerythus).